The primary structure comprises 560 residues: Phenol regulator MopR (560 aa).

The phenol site is built by His106 and Trp134. 4 residues coordinate Zn(2+): Cys155, Glu178, Cys181, and Cys189. The region spanning 245–474 (AVGESVAYRK…LENLLERATL (230 aa)) is the Sigma-54 factor interaction domain. ATP is bound by residues 273–280 (GETGVGKE) and 336–345 (AHGGTIFLDE).

In terms of assembly, homodimer.

Its activity is regulated as follows. Activity is triggered by phenol binding. In terms of biological role, involved in the regulation of the phenol degradation pathway. Activates phenol hydroxylase expression in the presence of phenol. This chain is Phenol regulator MopR, found in Acinetobacter guillouiae (Acinetobacter genomosp. 11).